A 249-amino-acid chain; its full sequence is uncharacterized protein (249 aa).

11 to 34 lines the NADP(+) pocket; sequence IFGGRSQIGGELARRLAAGATMVL. Residue S142 participates in substrate binding. The active-site Proton acceptor is the Y155.

It belongs to the short-chain dehydrogenases/reductases (SDR) family.

This is an uncharacterized protein from Mycobacterium tuberculosis (strain CDC 1551 / Oshkosh).